The primary structure comprises 177 residues: uncharacterized protein (177 aa).

This is an uncharacterized protein from Treponema pallidum (strain Nichols).